The chain runs to 105 residues: Met repressor (105 aa).

Belongs to the MetJ family. As to quaternary structure, homodimer.

It localises to the cytoplasm. In terms of biological role, this regulatory protein, when combined with SAM (S-adenosylmethionine) represses the expression of the methionine regulon and of enzymes involved in SAM synthesis. The protein is Met repressor of Haemophilus influenzae (strain PittEE).